Reading from the N-terminus, the 259-residue chain is Small ribosomal subunit protein uS2 (259 aa).

Belongs to the universal ribosomal protein uS2 family.

This chain is Small ribosomal subunit protein uS2, found in Streptococcus pneumoniae (strain Hungary19A-6).